The following is a 98-amino-acid chain: NADH-ubiquinone oxidoreductase chain 4L (98 aa).

The next 3 membrane-spanning stretches (helical) occupy residues 2–22 (PSIS…MLMF), 29–49 (SLLC…LIIL), and 61–81 (ILLL…LVMV).

Belongs to the complex I subunit 4L family. Core subunit of respiratory chain NADH dehydrogenase (Complex I) which is composed of 45 different subunits.

The protein localises to the mitochondrion inner membrane. It carries out the reaction a ubiquinone + NADH + 5 H(+)(in) = a ubiquinol + NAD(+) + 4 H(+)(out). In terms of biological role, core subunit of the mitochondrial membrane respiratory chain NADH dehydrogenase (Complex I) which catalyzes electron transfer from NADH through the respiratory chain, using ubiquinone as an electron acceptor. Part of the enzyme membrane arm which is embedded in the lipid bilayer and involved in proton translocation. This is NADH-ubiquinone oxidoreductase chain 4L (MT-ND4L) from Microcebus griseorufus (Gray-brown mouse lemur).